The primary structure comprises 286 residues: Phosphonates import ATP-binding protein PhnC (286 aa).

The 244-residue stretch at 3-246 folds into the ABC transporter domain; sequence FHLKQVTRRF…AVTEIYGTDS (244 aa). 35–42 contacts ATP; the sequence is GRSGAGKS.

It belongs to the ABC transporter superfamily. Phosphonates importer (TC 3.A.1.9.1) family. As to quaternary structure, the complex is composed of two ATP-binding proteins (PhnC), two transmembrane proteins (PhnE) and a solute-binding protein (PhnD).

It localises to the cell inner membrane. The catalysed reaction is phosphonate(out) + ATP + H2O = phosphonate(in) + ADP + phosphate + H(+). Its function is as follows. Part of the ABC transporter complex PhnCDE involved in phosphonates import. Responsible for energy coupling to the transport system. The protein is Phosphonates import ATP-binding protein PhnC of Agrobacterium fabrum (strain C58 / ATCC 33970) (Agrobacterium tumefaciens (strain C58)).